The following is a 993-amino-acid chain: Chromosome transmission fidelity protein 18 homolog (993 aa).

A disordered region spans residues 26-72; sequence PDEFNAYDGPSTSKQAAEKQKENRAPVAALRDSTRLGNSTLGSPQLS. Polar residues predominate over residues 60-72; sequence RLGNSTLGSPQLS. 427-434 contacts ATP; that stretch reads GPPGLGKT. Residues 892 to 913 are disordered; that stretch reads AAPKGGAPSAPAAKKKTSGAAA. The span at 894–913 shows a compositional bias: low complexity; it reads PKGGAPSAPAAKKKTSGAAA.

The protein belongs to the activator 1 small subunits family. CTF18 subfamily. In terms of assembly, component of the CTF18-RFC complex.

It is found in the nucleus. Chromosome cohesion factor involved in sister chromatid cohesion and fidelity of chromosome transmission. Component of one of the cell nuclear antigen loader complexes, CTF18-replication factor C (CTF18-RFC). The CTF18-RFC complex catalyzes the ATP-dependent loading of PCNA onto primed and gapped DNA and has weak ATPase activity. The CTF18-RFC complex catalyzes the ATP-dependent loading of PCNA onto primed and gapped DNA. This chain is Chromosome transmission fidelity protein 18 homolog, found in Drosophila melanogaster (Fruit fly).